An 84-amino-acid chain; its full sequence is Small ribosomal subunit protein bS20 (84 aa).

The disordered stretch occupies residues 1 to 32; it reads MPRHESAKKRMRQNEKRQKRNKSQKSRVRTKI.

Belongs to the bacterial ribosomal protein bS20 family.

Binds directly to 16S ribosomal RNA. The polypeptide is Small ribosomal subunit protein bS20 (Salinibacter ruber (strain DSM 13855 / M31)).